The sequence spans 290 residues: Light-independent protochlorophyllide reductase iron-sulfur ATP-binding protein (290 aa).

ATP contacts are provided by residues 34–39 and K63; that span reads GIGKST. S38 contacts Mg(2+). C119 and C153 together coordinate [4Fe-4S] cluster. Residues 204 to 205 and 228 to 230 contribute to the ATP site; these read NR and PDL.

This sequence belongs to the NifH/BchL/ChlL family. Homodimer. Protochlorophyllide reductase is composed of three subunits; BchL, BchN and BchB. [4Fe-4S] cluster is required as a cofactor.

The enzyme catalyses chlorophyllide a + oxidized 2[4Fe-4S]-[ferredoxin] + 2 ADP + 2 phosphate = protochlorophyllide a + reduced 2[4Fe-4S]-[ferredoxin] + 2 ATP + 2 H2O. The protein operates within porphyrin-containing compound metabolism; bacteriochlorophyll biosynthesis (light-independent). In terms of biological role, component of the dark-operative protochlorophyllide reductase (DPOR) that uses Mg-ATP and reduced ferredoxin to reduce ring D of protochlorophyllide (Pchlide) to form chlorophyllide a (Chlide). This reaction is light-independent. The L component serves as a unique electron donor to the NB-component of the complex, and binds Mg-ATP. The protein is Light-independent protochlorophyllide reductase iron-sulfur ATP-binding protein of Rhodospirillum rubrum.